The sequence spans 148 residues: Small ribosomal subunit protein eS12B (148 aa).

Belongs to the eukaryotic ribosomal protein eS12 family. Component of the small ribosomal subunit (SSU). Mature yeast ribosomes consist of a small (40S) and a large (60S) subunit. The 40S small subunit contains 1 molecule of ribosomal RNA (18S rRNA) and at least 33 different proteins. The large 60S subunit contains 3 rRNA molecules (25S, 5.8S and 5S rRNA) and at least 46 different proteins.

It localises to the cytoplasm. Component of the ribosome, a large ribonucleoprotein complex responsible for the synthesis of proteins in the cell. The small ribosomal subunit (SSU) binds messenger RNAs (mRNAs) and translates the encoded message by selecting cognate aminoacyl-transfer RNA (tRNA) molecules. The large subunit (LSU) contains the ribosomal catalytic site termed the peptidyl transferase center (PTC), which catalyzes the formation of peptide bonds, thereby polymerizing the amino acids delivered by tRNAs into a polypeptide chain. The nascent polypeptides leave the ribosome through a tunnel in the LSU and interact with protein factors that function in enzymatic processing, targeting, and the membrane insertion of nascent chains at the exit of the ribosomal tunnel. The sequence is that of Small ribosomal subunit protein eS12B (rps1202) from Schizosaccharomyces pombe (strain 972 / ATCC 24843) (Fission yeast).